The sequence spans 312 residues: Malate dehydrogenase (312 aa).

NAD(+)-binding positions include 7 to 13 (GAAGGIG) and D34. Residues R81 and R87 each coordinate substrate. Residues N94 and 117 to 119 (ITN) each bind NAD(+). Residues N119 and R153 each coordinate substrate. Residue H177 is the Proton acceptor of the active site. Residue M227 coordinates NAD(+).

The protein belongs to the LDH/MDH superfamily. MDH type 1 family. Homodimer.

It catalyses the reaction (S)-malate + NAD(+) = oxaloacetate + NADH + H(+). Functionally, catalyzes the reversible oxidation of malate to oxaloacetate. The chain is Malate dehydrogenase from Citrobacter koseri (strain ATCC BAA-895 / CDC 4225-83 / SGSC4696).